A 117-amino-acid chain; its full sequence is LIM and senescent cell antigen-like-containing domain protein 3 (117 aa).

The region spanning 70–117 (ATCERCKGGFAPAETIVNSNGELYHEQCFVCAQCFQQFPEGLFYEERT) is the LIM zinc-binding domain.

In terms of tissue distribution, detected in testis.

The protein resides in the cytoplasm. In Homo sapiens (Human), this protein is LIM and senescent cell antigen-like-containing domain protein 3 (LIMS3).